Consider the following 810-residue polypeptide: Nuclear pore complex protein NUP88 (810 aa).

The tract at residues 1-23 is disordered; that stretch reads MKFNFNETEDAPDSRRSPTPKEP. Residues 646 to 748 adopt a coiled-coil conformation; the sequence is APNLKRIIDD…RARVKKSTQK (103 aa).

As to quaternary structure, part of the nuclear pore complex (NPC). The NPC has an eight-fold symmetrical structure comprising a central transport channel and two rings, the cytoplasmic and nuclear rings, to which eight filaments are attached. The cytoplasmic filaments have loose ends, while the nuclear filaments are joined in a distal ring, forming a nuclear basket. NPCs are highly dynamic in configuration and composition, and can be devided in 3 subcomplexes, the NUP62 subcomplex, the NUP107-160 subcomplex and the NUP93 subcomplex, containing approximately 30 different nucleoporin proteins.

It is found in the nucleus envelope. Its subcellular location is the nucleus. The protein localises to the nuclear pore complex. Functionally, involved in the regulation of exportin-mediated nuclear protein export. Required for resistance mediated by multiple R proteins and for the appropriate nuclear accumulation of SNC1 and of the downstream defense signaling components EDS1 and NPR1. Not involved in salt tolerance, ethylene and auxin responses, but required for systemic acquired resistance. The sequence is that of Nuclear pore complex protein NUP88 from Arabidopsis thaliana (Mouse-ear cress).